Reading from the N-terminus, the 227-residue chain is Phosphatidylethanolamine-binding protein 4 (227 aa).

Residues 1-22 (MGWTMRLVTAALLLGLMMVVTG) form the signal peptide. A glycan (N-linked (GlcNAc...) (complex) asparagine) is linked at Asn169. The interval 188 to 227 (EPEASTQFMTQNYQDSPTLQAPRERASEPKHKNQAEIAAC) is important for secretion. The disordered stretch occupies residues 202–227 (DSPTLQAPRERASEPKHKNQAEIAAC). Positions 209–221 (PRERASEPKHKNQ) are enriched in basic and acidic residues.

This sequence belongs to the phosphatidylethanolamine-binding protein family.

It localises to the secreted. Functionally, promotes AKT phosphorylation, suggesting a possible role in the PI3K-AKT signaling pathway. The chain is Phosphatidylethanolamine-binding protein 4 (PEBP4) from Homo sapiens (Human).